We begin with the raw amino-acid sequence, 519 residues long: Threonine synthase, chloroplastic (519 aa).

Residues 1–40 (MAASCMLRSSFISPGLPQLHHQSTSKPNNGIHFFTPIKAT) constitute a chloroplast transit peptide. Lysine 196 carries the post-translational modification N6-(pyridoxal phosphate)lysine. Residues 328-332 (GNLGN) and threonine 465 each bind pyridoxal 5'-phosphate.

This sequence belongs to the threonine synthase family. As to quaternary structure, homodimer. Requires pyridoxal 5'-phosphate as cofactor.

The protein localises to the plastid. It is found in the chloroplast. It carries out the reaction O-phospho-L-homoserine + H2O = L-threonine + phosphate. It participates in amino-acid biosynthesis; L-threonine biosynthesis; L-threonine from L-aspartate: step 5/5. Allosterically activated by S-adenosyl-methionine (SAM). Catalyzes the gamma-elimination of phosphate from L-phosphohomoserine and the beta-addition of water to produce L-threonine. The polypeptide is Threonine synthase, chloroplastic (Solanum tuberosum (Potato)).